A 656-amino-acid chain; its full sequence is Macrolide export ATP-binding/permease protein MacB (656 aa).

The ABC transporter domain occupies 6 to 244 (LEVSACYRSF…VKAQVDMSLA (239 aa)). Position 42-49 (42-49 (GASGSGKS)) interacts with ATP. Transmembrane regions (helical) follow at residues 277 to 297 (FLTMLGIIIGIASVVSVVALG), 531 to 551 (LLISAIAVISLVVGGIGVMNI), 586 to 606 (LVCLCGGALGVALAYLIGVVF), and 621 to 641 (SIVAAFACSTLIGVLFGFLPA).

Belongs to the ABC transporter superfamily. Macrolide exporter (TC 3.A.1.122) family. Homodimer. Part of the tripartite efflux system MacAB-TolC, which is composed of an inner membrane transporter, MacB, a periplasmic membrane fusion protein, MacA, and an outer membrane component, TolC. The complex forms a large protein conduit and can translocate molecules across both the inner and outer membranes. Interacts with MacA.

The protein resides in the cell inner membrane. Part of the tripartite efflux system MacAB-TolC. MacB is a non-canonical ABC transporter that contains transmembrane domains (TMD), which form a pore in the inner membrane, and an ATP-binding domain (NBD), which is responsible for energy generation. Confers resistance against macrolides. This Shewanella oneidensis (strain ATCC 700550 / JCM 31522 / CIP 106686 / LMG 19005 / NCIMB 14063 / MR-1) protein is Macrolide export ATP-binding/permease protein MacB.